A 567-amino-acid polypeptide reads, in one-letter code: Beta-galactoside-specific lectin 2 (567 aa).

A signal peptide spans 1-33 (MNARLASSRAWVWCFLMVGLVCGATAKAESKIN). A glycan (N-linked (GlcNAc...) asparagine) is linked at Asn145. Glu198 is an active-site residue. Intrachain disulfides connect Cys280-Cys306 and Cys322-Cys341. Residues 288–301 (DVHNWPLVIRPVMV) constitute a propeptide, connecting peptide. The Ricin B-type lectin 1 domain occupies 309–439 (SEPTVRIVGR…DSLGQSWLAS (131 aa)). 324-326 (DVR) is a binding site for D-galactose. Residue Asn362 is glycosylated (N-linked (GlcNAc...) asparagine). Cys365 and Cys382 form a disulfide bridge. The N-linked (GlcNAc...) asparagine glycan is linked to Asn440. The Ricin B-type lectin 2 domain occupies 443–566 (APREVTIYGF…GNPNQMWLPV (124 aa)). Cystine bridges form between Cys456-Cys469 and Cys495-Cys512. 539 to 541 (DVR) is a binding site for D-galactose.

This sequence belongs to the ribosome-inactivating protein family. Type 2 RIP subfamily. In terms of assembly, disulfide-linked dimer of A and B chains.

The catalysed reaction is Endohydrolysis of the N-glycosidic bond at one specific adenosine on the 28S rRNA.. The A chain is responsible for inhibiting protein synthesis through the catalytic inactivation of 60S ribosomal subunits by removing adenine from position 4,324 of 28S rRNA. The B chain binds to cell receptors and probably facilitates the entry into the cell of the A chain; B chains are also responsible for cell agglutination (lectin activity). The protein is Beta-galactoside-specific lectin 2 of Viscum album (European mistletoe).